Consider the following 98-residue polypeptide: ATP-dependent Clp protease adapter protein ClpS (98 aa).

Belongs to the ClpS family. As to quaternary structure, binds to the N-terminal domain of the chaperone ClpA.

Involved in the modulation of the specificity of the ClpAP-mediated ATP-dependent protein degradation. The polypeptide is ATP-dependent Clp protease adapter protein ClpS (Synechocystis sp. (strain ATCC 27184 / PCC 6803 / Kazusa)).